The primary structure comprises 337 residues: ERI1 exoribonuclease 3 (337 aa).

Residues 146–320 (FLVLDFEATC…DDCKNIANIM (175 aa)) enclose the Exonuclease domain. Aspartate 150, glutamate 152, and aspartate 249 together coordinate Mg(2+). The active-site Proton acceptor is the glutamate 152. AMP is bound at residue glutamate 152. Histidine 307 acts as the Proton acceptor in catalysis. Residue histidine 307 participates in AMP binding. Residue aspartate 312 coordinates Mg(2+).

In terms of assembly, interacts with PRNP. Requires Mg(2+) as cofactor.

This is ERI1 exoribonuclease 3 (ERI3) from Bos taurus (Bovine).